A 164-amino-acid polypeptide reads, in one-letter code: Thiol peroxidase (164 aa).

Residues 16 to 162 (LQVGDIAKDF…YEAAINAAKI (147 aa)) enclose the Thioredoxin domain. Cys58 (cysteine sulfenic acid (-SOH) intermediate) is an active-site residue. The cysteines at positions 58 and 92 are disulfide-linked.

It belongs to the peroxiredoxin family. Tpx subfamily. As to quaternary structure, homodimer.

The enzyme catalyses a hydroperoxide + [thioredoxin]-dithiol = an alcohol + [thioredoxin]-disulfide + H2O. Its function is as follows. Thiol-specific peroxidase that catalyzes the reduction of hydrogen peroxide and organic hydroperoxides to water and alcohols, respectively. Plays a role in cell protection against oxidative stress by detoxifying peroxides. In Streptococcus agalactiae serotype III (strain NEM316), this protein is Thiol peroxidase.